The following is a 172-amino-acid chain: MNLKEHIRVIENFPKEGISFKDVTTILQDGKVLNYTVDKLAENLKDKKIDKIVGPEARGFLFGTPLAYKLGVGFVPVRKKGKLPYETISCKYDLEYGQDELQIHKDSIKKGDKVAIVDDLLATGGTIASVVKLVEELGGEVVNVSFVIELTDLKGKDKLEGYDINSLVQYNI.

This sequence belongs to the purine/pyrimidine phosphoribosyltransferase family. In terms of assembly, homodimer.

Its subcellular location is the cytoplasm. The enzyme catalyses AMP + diphosphate = 5-phospho-alpha-D-ribose 1-diphosphate + adenine. It functions in the pathway purine metabolism; AMP biosynthesis via salvage pathway; AMP from adenine: step 1/1. Its function is as follows. Catalyzes a salvage reaction resulting in the formation of AMP, that is energically less costly than de novo synthesis. The polypeptide is Adenine phosphoribosyltransferase (Clostridium botulinum (strain Loch Maree / Type A3)).